Reading from the N-terminus, the 275-residue chain is Dermonecrotic toxin SpaSicTox-betaIIA1 (275 aa).

His5 is a catalytic residue. Residues Glu25 and Asp27 each coordinate Mg(2+). The active-site Nucleophile is His41. 2 disulfides stabilise this stretch: Cys45–Cys51 and Cys47–Cys190. A Mg(2+)-binding site is contributed by Asp85.

This sequence belongs to the arthropod phospholipase D family. Class II subfamily. The cofactor is Mg(2+). Expressed by the venom gland.

The protein localises to the secreted. It carries out the reaction an N-(acyl)-sphingosylphosphocholine = an N-(acyl)-sphingosyl-1,3-cyclic phosphate + choline. The catalysed reaction is an N-(acyl)-sphingosylphosphoethanolamine = an N-(acyl)-sphingosyl-1,3-cyclic phosphate + ethanolamine. It catalyses the reaction a 1-acyl-sn-glycero-3-phosphocholine = a 1-acyl-sn-glycero-2,3-cyclic phosphate + choline. The enzyme catalyses a 1-acyl-sn-glycero-3-phosphoethanolamine = a 1-acyl-sn-glycero-2,3-cyclic phosphate + ethanolamine. Dermonecrotic toxins cleave the phosphodiester linkage between the phosphate and headgroup of certain phospholipids (sphingolipid and lysolipid substrates), forming an alcohol (often choline) and a cyclic phosphate. This toxin acts on sphingomyelin (SM). It may also act on ceramide phosphoethanolamine (CPE), lysophosphatidylcholine (LPC) and lysophosphatidylethanolamine (LPE), but not on lysophosphatidylserine (LPS), and lysophosphatidylglycerol (LPG). It acts by transphosphatidylation, releasing exclusively cyclic phosphate products as second products. Induces dermonecrosis, hemolysis, increased vascular permeability, edema, inflammatory response, and platelet aggregation. This chain is Dermonecrotic toxin SpaSicTox-betaIIA1, found in Sicarius patagonicus (Six-eyed sand spider).